Reading from the N-terminus, the 718-residue chain is MPDLLLELRSEEIPARMQRKAAGDLKKMLTDGLVEAGLTYEAAREYWTPRRLTLDIRGLTARSKDIREEIKGPSTTAPEQAVQGFLRKAGLSSVADAHVHSDPKKGDFYVAHISKPGRAAEEIIAQLVPGIIRNFPWPKSMRWGPASAKPGSLRWVRPLQSVLCTFGPETEEPVVVDFEIDGIRSGNITYGHRFLAPGEITVRRFDDYVSKLEAAKVVLDADRRKEIILADARNLAFANGLDLVEDEGLLEEVSGLVEWPVVLMGEFEEAFLAIPAEVIRLTIRANQKCFVTRPQGEGEALSNRFILTSNIEARDGGKEIAHGNGKVVRARLSDALYFWTTDQGDLPDLGQLEASAEKFGLDLNKPLDQRMARLDHLNVTFHAKLGTQGERVERIRRLAEELAPTVGADPVLAARAAVLAKADLQTEVVGEFPELQGAMGRKYALLQGEHPSVAAAIEEHYKPQGPSDYVPSDPVSVAVALADKLDTLVGFWAIDEKPTGSKDPYALRRAALGVVRILVEDRIQLRLSSIFASAGACYAGSGADQTRDLLAFFHDRLKVYLRDQGARHDLIDAVITPQSDDLLQIVRRVEALGSFLDTEDGKNLLAGTKRAANILAAEEKKKTAVAKTVEPALFKENAEKSLFAAVNQAEKQAGEAIQNEDFSAAMLALSALREPVDSFFEGVLVNDEDLEVRANRLALLTRIRAATGQVADFSKIAG.

This sequence belongs to the class-II aminoacyl-tRNA synthetase family. In terms of assembly, tetramer of two alpha and two beta subunits.

It localises to the cytoplasm. The catalysed reaction is tRNA(Gly) + glycine + ATP = glycyl-tRNA(Gly) + AMP + diphosphate. This chain is Glycine--tRNA ligase beta subunit, found in Mesorhizobium japonicum (strain LMG 29417 / CECT 9101 / MAFF 303099) (Mesorhizobium loti (strain MAFF 303099)).